A 331-amino-acid chain; its full sequence is Tyrosine recombinase XerD (331 aa).

A Core-binding (CB) domain is found at 8–93 (GRDGARLESF…SMRQFYRFLY (86 aa)). Residues 114–318 (ALPKTMSVAD…LEERLQELVQ (205 aa)) enclose the Tyr recombinase domain. Catalysis depends on residues Arg161 and Lys185. The span at 214 to 228 (QEKSKAAASQKKTDT) shows a compositional bias: basic and acidic residues. The segment at 214 to 239 (QEKSKAAASQKKTDTAESPWLFPSNS) is disordered. Catalysis depends on residues His270, Arg273, and His296. Tyr305 (O-(3'-phospho-DNA)-tyrosine intermediate) is an active-site residue.

The protein belongs to the 'phage' integrase family. XerD subfamily. Forms a cyclic heterotetrameric complex composed of two molecules of XerC and two molecules of XerD.

The protein localises to the cytoplasm. Site-specific tyrosine recombinase, which acts by catalyzing the cutting and rejoining of the recombining DNA molecules. The XerC-XerD complex is essential to convert dimers of the bacterial chromosome into monomers to permit their segregation at cell division. It also contributes to the segregational stability of plasmids. The polypeptide is Tyrosine recombinase XerD (Agrobacterium fabrum (strain C58 / ATCC 33970) (Agrobacterium tumefaciens (strain C58))).